A 307-amino-acid polypeptide reads, in one-letter code: 4-hydroxy-3-methylbut-2-enyl diphosphate reductase (307 aa).

Cysteine 12 is a binding site for [4Fe-4S] cluster. Histidine 41 and histidine 74 together coordinate (2E)-4-hydroxy-3-methylbut-2-enyl diphosphate. The dimethylallyl diphosphate site is built by histidine 41 and histidine 74. 2 residues coordinate isopentenyl diphosphate: histidine 41 and histidine 74. Cysteine 96 serves as a coordination point for [4Fe-4S] cluster. Histidine 124 contributes to the (2E)-4-hydroxy-3-methylbut-2-enyl diphosphate binding site. Histidine 124 provides a ligand contact to dimethylallyl diphosphate. Histidine 124 provides a ligand contact to isopentenyl diphosphate. Glutamate 126 functions as the Proton donor in the catalytic mechanism. Threonine 165 is a (2E)-4-hydroxy-3-methylbut-2-enyl diphosphate binding site. Cysteine 195 is a binding site for [4Fe-4S] cluster. (2E)-4-hydroxy-3-methylbut-2-enyl diphosphate is bound by residues serine 223, serine 224, asparagine 225, and serine 267. Dimethylallyl diphosphate is bound by residues serine 223, serine 224, asparagine 225, and serine 267. The isopentenyl diphosphate site is built by serine 223, serine 224, asparagine 225, and serine 267.

This sequence belongs to the IspH family. The cofactor is [4Fe-4S] cluster.

The catalysed reaction is isopentenyl diphosphate + 2 oxidized [2Fe-2S]-[ferredoxin] + H2O = (2E)-4-hydroxy-3-methylbut-2-enyl diphosphate + 2 reduced [2Fe-2S]-[ferredoxin] + 2 H(+). It catalyses the reaction dimethylallyl diphosphate + 2 oxidized [2Fe-2S]-[ferredoxin] + H2O = (2E)-4-hydroxy-3-methylbut-2-enyl diphosphate + 2 reduced [2Fe-2S]-[ferredoxin] + 2 H(+). It participates in isoprenoid biosynthesis; dimethylallyl diphosphate biosynthesis; dimethylallyl diphosphate from (2E)-4-hydroxy-3-methylbutenyl diphosphate: step 1/1. It functions in the pathway isoprenoid biosynthesis; isopentenyl diphosphate biosynthesis via DXP pathway; isopentenyl diphosphate from 1-deoxy-D-xylulose 5-phosphate: step 6/6. In terms of biological role, catalyzes the conversion of 1-hydroxy-2-methyl-2-(E)-butenyl 4-diphosphate (HMBPP) into a mixture of isopentenyl diphosphate (IPP) and dimethylallyl diphosphate (DMAPP). Acts in the terminal step of the DOXP/MEP pathway for isoprenoid precursor biosynthesis. In Magnetococcus marinus (strain ATCC BAA-1437 / JCM 17883 / MC-1), this protein is 4-hydroxy-3-methylbut-2-enyl diphosphate reductase.